Here is an 86-residue protein sequence, read N- to C-terminus: Small ribosomal subunit protein bS20 (86 aa).

Positions 1 to 26 (MANIKSAKKRAITSEKRRQHNASRRS) are disordered.

Belongs to the bacterial ribosomal protein bS20 family.

In terms of biological role, binds directly to 16S ribosomal RNA. This is Small ribosomal subunit protein bS20 from Photobacterium profundum (strain SS9).